The primary structure comprises 502 residues: ATP synthase subunit alpha (502 aa).

169-176 (GDRQTGKT) lines the ATP pocket.

This sequence belongs to the ATPase alpha/beta chains family. F-type ATPases have 2 components, CF(1) - the catalytic core - and CF(0) - the membrane proton channel. CF(1) has five subunits: alpha(3), beta(3), gamma(1), delta(1), epsilon(1). CF(0) has three main subunits: a(1), b(2) and c(9-12). The alpha and beta chains form an alternating ring which encloses part of the gamma chain. CF(1) is attached to CF(0) by a central stalk formed by the gamma and epsilon chains, while a peripheral stalk is formed by the delta and b chains.

The protein resides in the cell inner membrane. The catalysed reaction is ATP + H2O + 4 H(+)(in) = ADP + phosphate + 5 H(+)(out). Its function is as follows. Produces ATP from ADP in the presence of a proton gradient across the membrane. The alpha chain is a regulatory subunit. In Geobacter sp. (strain M21), this protein is ATP synthase subunit alpha.